The following is a 658-amino-acid chain: Probable methyl-accepting chemotaxis protein BT9727_0469 (658 aa).

Residues 1–14 (MLQGKLRRSSLKAK) lie on the Cytoplasmic side of the membrane. The helical transmembrane segment at 15-35 (LLVSFVIVLILPSIVIGWTSY) threads the bilayer. Topologically, residues 36–283 (QQAKTNFNET…ANPIFYKTLT (248 aa)) are extracellular. Residues 44–109 (ETILQSAEDN…NKLHPEIEAI (66 aa)) adopt a coiled-coil conformation. Residues 150–221 (ITAPYKSSTT…AHPTMKPGDK (72 aa)) enclose the Cache domain. Residues 284-304 (VIGISLIIGGVLIYFIIASII) traverse the membrane as a helical segment. In terms of domain architecture, HAMP spans 301–353 (ASIISPLKQLVISSKKISEGDLTETITVHSKDEIGQLGESFNEMAASLHHVIS). Residues 305 to 658 (SPLKQLVISS…LQEMIGKFKV (354 aa)) are Cytoplasmic-facing. Glutamate 368 carries the glutamate methyl ester (Glu) modification. Residues 372 to 622 (SMKQTSEATE…ENAASVQNIA (251 aa)) enclose the Methyl-accepting transducer domain. Glutamine 592 carries the post-translational modification Deamidated glutamine. The residue at position 592 (glutamine 592) is a Glutamate methyl ester (Gln). Glutamate 627 and glutamate 634 each carry glutamate methyl ester (Glu).

It belongs to the methyl-accepting chemotaxis (MCP) protein family.

The protein resides in the cell membrane. Its function is as follows. Chemotactic-signal transducers respond to changes in the concentration of attractants and repellents in the environment, transduce a signal from the outside to the inside of the cell, and facilitate sensory adaptation through the variation of the level of methylation. The sequence is that of Probable methyl-accepting chemotaxis protein BT9727_0469 from Bacillus thuringiensis subsp. konkukian (strain 97-27).